The primary structure comprises 92 residues: Plasmid copy control protein CopR (92 aa).

The span at 1–27 (MELAFRESLKKMRGTKSKEKFSQELEM) shows a compositional bias: basic and acidic residues. Disordered regions lie at residues 1 to 40 (MELA…SGKS) and 63 to 92 (IPNE…NDFV). Residues 9–62 (LKKMRGTKSKEKFSQELEMSRSNYSRIESGKSDPTIKTLEQIVKLTNSTLVVDL) form the HTH cro/C1-type domain. Residues 20–39 (KFSQELEMSRSNYSRIESGK) constitute a DNA-binding region (H-T-H motif).

In terms of biological role, involved in copy control of plasmid pIP501. This Streptococcus agalactiae protein is Plasmid copy control protein CopR (copR).